A 305-amino-acid polypeptide reads, in one-letter code: Acetyl-coenzyme A carboxylase carboxyl transferase subunit beta (305 aa).

Residues 29–298 (LWTKCESCDA…EMKLPLLESS (270 aa)) form the CoA carboxyltransferase N-terminal domain. The Zn(2+) site is built by cysteine 33, cysteine 36, cysteine 52, and cysteine 55. A C4-type zinc finger spans residues 33–55 (CESCDALTYTKDLQANLMVCLQC).

It belongs to the AccD/PCCB family. In terms of assembly, acetyl-CoA carboxylase is a heterohexamer composed of biotin carboxyl carrier protein (AccB), biotin carboxylase (AccC) and two subunits each of ACCase subunit alpha (AccA) and ACCase subunit beta (AccD). The cofactor is Zn(2+).

The protein localises to the cytoplasm. The catalysed reaction is N(6)-carboxybiotinyl-L-lysyl-[protein] + acetyl-CoA = N(6)-biotinyl-L-lysyl-[protein] + malonyl-CoA. The protein operates within lipid metabolism; malonyl-CoA biosynthesis; malonyl-CoA from acetyl-CoA: step 1/1. Component of the acetyl coenzyme A carboxylase (ACC) complex. Biotin carboxylase (BC) catalyzes the carboxylation of biotin on its carrier protein (BCCP) and then the CO(2) group is transferred by the transcarboxylase to acetyl-CoA to form malonyl-CoA. In Synechococcus sp. (strain ATCC 27144 / PCC 6301 / SAUG 1402/1) (Anacystis nidulans), this protein is Acetyl-coenzyme A carboxylase carboxyl transferase subunit beta.